A 379-amino-acid polypeptide reads, in one-letter code: uncharacterized protein (379 aa).

It belongs to the herpesviridae US22 family.

This is an uncharacterized protein from Human cytomegalovirus (strain AD169) (HHV-5).